A 630-amino-acid polypeptide reads, in one-letter code: Threonine--tRNA ligase (630 aa).

Residues M1 to T137 are editing domain. Residues P207 to P506 form a catalytic region. The Zn(2+) site is built by C299, H351, and H475.

Belongs to the class-II aminoacyl-tRNA synthetase family. In terms of assembly, homodimer. Requires Zn(2+) as cofactor.

The protein localises to the cytoplasm. The enzyme catalyses tRNA(Thr) + L-threonine + ATP = L-threonyl-tRNA(Thr) + AMP + diphosphate + H(+). Functionally, catalyzes the attachment of threonine to tRNA(Thr) in a two-step reaction: L-threonine is first activated by ATP to form Thr-AMP and then transferred to the acceptor end of tRNA(Thr). Also edits incorrectly charged L-seryl-tRNA(Thr). In Methanococcus aeolicus (strain ATCC BAA-1280 / DSM 17508 / OCM 812 / Nankai-3), this protein is Threonine--tRNA ligase.